A 265-amino-acid polypeptide reads, in one-letter code: Mlc titration factor A (265 aa).

Zn(2+)-binding residues include histidine 111, histidine 148, histidine 152, and glutamate 211.

It belongs to the MtfA family. In terms of assembly, interacts with Mlc. Zn(2+) is required as a cofactor.

The protein resides in the cytoplasm. In terms of biological role, involved in the modulation of the activity of the glucose-phosphotransferase system (glucose-PTS). Interacts with the transcriptional repressor Mlc, preventing its interaction with DNA and leading to the modulation of expression of genes regulated by Mlc, including ptsG, which encodes the PTS system glucose-specific EIICB component. Functionally, shows zinc-dependent metallopeptidase activity. The polypeptide is Mlc titration factor A (Salmonella schwarzengrund (strain CVM19633)).